Here is a 268-residue protein sequence, read N- to C-terminus: Basic endochitinase CHB4 (268 aa).

Positions 1–24 (MALTKLSLVLFLCFLGLYSETVKS) are cleaved as a signal peptide. The Chitin-binding type-1 domain maps to 25–59 (QNCGCAPNLCCSQFGYCGSTDAYCGTGCRSGPCRS). 7 cysteine pairs are disulfide-bonded: Cys-27–Cys-35, Cys-29–Cys-41, Cys-34–Cys-48, Cys-52–Cys-57, Cys-92–Cys-137, Cys-150–Cys-159, and Cys-236–Cys-268. The tract at residues 71–268 (SVGSIVTQAF…GVDPGPNLSC (198 aa)) is catalytic. Glu-132 (proton donor) is an active-site residue. Asn-265 is a glycosylation site (N-linked (GlcNAc...) asparagine).

It belongs to the glycosyl hydrolase 19 family. Chitinase class I subfamily.

Its subcellular location is the secreted. It is found in the extracellular space. The enzyme catalyses Random endo-hydrolysis of N-acetyl-beta-D-glucosaminide (1-&gt;4)-beta-linkages in chitin and chitodextrins.. Defense against chitin-containing fungal pathogens. This chain is Basic endochitinase CHB4, found in Brassica napus (Rape).